Consider the following 271-residue polypeptide: MDNRPIGLLDSGVGGLTVARELLRQLPNEEIVYIGDTRRAPYGPRSREQIIAFTWDMVNFLLSKNVKMIVMACNTATAMTLEIVKEELDIPVIGVILPGASSAIQKTKTNKIGVIATQASIRSDEYHKTIARKSSAIEVLSLACPKFVSIVESNEMESEIAKRVVSESLAPLVGKIDTLILGCTHYPLLRSLIQETMGKEVRLIDSGAEAVRDISVLLNYFEINAHERKEYQHCFYTTAGVNSFREIAEKWLNIGHLHIEHAEIENFNKEK.

Substrate is bound by residues aspartate 10–serine 11 and tyrosine 42–glycine 43. Cysteine 73 functions as the Proton donor/acceptor in the catalytic mechanism. Substrate is bound at residue asparagine 74–threonine 75. Cysteine 183 functions as the Proton donor/acceptor in the catalytic mechanism. A substrate-binding site is contributed by threonine 184 to histidine 185.

It belongs to the aspartate/glutamate racemases family.

The enzyme catalyses L-glutamate = D-glutamate. Its pathway is cell wall biogenesis; peptidoglycan biosynthesis. Provides the (R)-glutamate required for cell wall biosynthesis. The polypeptide is Glutamate racemase (Lactococcus lactis subsp. cremoris (strain SK11)).